The chain runs to 159 residues: NADH-quinone oxidoreductase subunit B (159 aa).

[4Fe-4S] cluster contacts are provided by Cys-32, Cys-33, Cys-97, and Cys-126.

Belongs to the complex I 20 kDa subunit family. In terms of assembly, NDH-1 is composed of 14 different subunits. Subunits NuoB, C, D, E, F, and G constitute the peripheral sector of the complex. The cofactor is [4Fe-4S] cluster.

Its subcellular location is the cell inner membrane. It catalyses the reaction a quinone + NADH + 5 H(+)(in) = a quinol + NAD(+) + 4 H(+)(out). Its function is as follows. NDH-1 shuttles electrons from NADH, via FMN and iron-sulfur (Fe-S) centers, to quinones in the respiratory chain. The immediate electron acceptor for the enzyme in this species is believed to be ubiquinone. Couples the redox reaction to proton translocation (for every two electrons transferred, four hydrogen ions are translocated across the cytoplasmic membrane), and thus conserves the redox energy in a proton gradient. The polypeptide is NADH-quinone oxidoreductase subunit B (Helicobacter acinonychis (strain Sheeba)).